The chain runs to 168 residues: Mediator of RNA polymerase II transcription subunit 7a (168 aa).

Coiled coils occupy residues Lys64–Leu92 and Ile132–Asp166.

It belongs to the Mediator complex subunit 7 family. Component of the Mediator complex. Interacts with MEE14/CBP1.

The protein localises to the nucleus. Component of the Mediator complex, a coactivator involved in the regulated transcription of nearly all RNA polymerase II-dependent genes. Mediator functions as a bridge to convey information from gene-specific regulatory proteins to the basal RNA polymerase II transcription machinery. The Mediator complex, having a compact conformation in its free form, is recruited to promoters by direct interactions with regulatory proteins and serves for the assembly of a functional pre-initiation complex with RNA polymerase II and the general transcription factors. The sequence is that of Mediator of RNA polymerase II transcription subunit 7a (MED7A) from Arabidopsis thaliana (Mouse-ear cress).